Consider the following 947-residue polypeptide: Serine-aspartate repeat-containing protein C (947 aa).

The signal sequence occupies residues 1-50 (MNNKKTATNRKGMIPNRLNKFSIRKYSVGTASILVGTTLIFGLSGHEAKA). The segment at 51–164 (AEHTNGELNQ…STTPKTTTIK (114 aa)) is disordered. A ligand binding A region region spans residues 51 to 495 (AEHTNGELNQ…GSSTANGDQK (445 aa)). The segment covering 56 to 71 (GELNQSKNETTAPSEN) has biased composition (polar residues). Basic and acidic residues predominate over residues 72–83 (KTTKKVDSRQLK). Residues 84 to 155 (DNTQTATADQ…SNLTQAKDVS (72 aa)) show a composition bias toward polar residues. CNA-B domains follow at residues 496 to 606 (KYNL…YKTP) and 607 to 717 (KYSL…EEET). The tract at residues 678-927 (TQTGTNTTED…NNSNNGTLFG (250 aa)) is disordered. Composition is skewed to acidic residues over residues 685 to 695 (TEDDKDADGGE) and 712 to 886 (YYEE…DSDS). Residues 910–914 (LPETG) carry the LPXTG sorting signal motif. Residues 912–927 (ETGSENNNSNNGTLFG) show a composition bias toward low complexity. Thr-913 is modified (pentaglycyl murein peptidoglycan amidated threonine). Positions 914-947 (GSENNNSNNGTLFGGLFAALGSLLLFGRRKKQNK) are cleaved as a propeptide — removed by sortase.

This sequence belongs to the serine-aspartate repeat-containing protein (SDr) family. In terms of assembly, homodimerizes; via N2-Domain. Interacts with host NRXN1; this interaction mediates bacterial attachment to host cells.

The protein resides in the secreted. Its subcellular location is the cell wall. Its function is as follows. Cell surface-associated calcium-binding protein which plays an important role in adhesion and pathogenesis. Mediates interactions with components of the extracellular matrix such as host NRXN1 to promote bacterial adhesion. The polypeptide is Serine-aspartate repeat-containing protein C (sdrC) (Staphylococcus aureus (strain USA300)).